We begin with the raw amino-acid sequence, 297 residues long: tRNA dimethylallyltransferase (297 aa).

Position 15–22 (15–22 (GPTASGKS)) interacts with ATP. 17-22 (TASGKS) lines the substrate pocket. Interaction with substrate tRNA stretches follow at residues 40 to 43 (DSMQ) and 164 to 168 (QRIVR).

It belongs to the IPP transferase family. As to quaternary structure, monomer. Mg(2+) is required as a cofactor.

It catalyses the reaction adenosine(37) in tRNA + dimethylallyl diphosphate = N(6)-dimethylallyladenosine(37) in tRNA + diphosphate. Catalyzes the transfer of a dimethylallyl group onto the adenine at position 37 in tRNAs that read codons beginning with uridine, leading to the formation of N6-(dimethylallyl)adenosine (i(6)A). This Rhizobium etli (strain CIAT 652) protein is tRNA dimethylallyltransferase.